A 147-amino-acid chain; its full sequence is Large ribosomal subunit protein bL9 (147 aa).

Belongs to the bacterial ribosomal protein bL9 family.

Functionally, binds to the 23S rRNA. This chain is Large ribosomal subunit protein bL9, found in Campylobacter lari (strain RM2100 / D67 / ATCC BAA-1060).